Here is a 224-residue protein sequence, read N- to C-terminus: Imidazoleglycerol-phosphate dehydratase (224 aa).

The protein belongs to the imidazoleglycerol-phosphate dehydratase family.

It catalyses the reaction D-erythro-1-(imidazol-4-yl)glycerol 3-phosphate = 3-(imidazol-4-yl)-2-oxopropyl phosphate + H2O. It functions in the pathway amino-acid biosynthesis; L-histidine biosynthesis; L-histidine from 5-phospho-alpha-D-ribose 1-diphosphate: step 6/9. The protein is Imidazoleglycerol-phosphate dehydratase (HIS3) of Cyberlindnera jadinii (Torula yeast).